Consider the following 284-residue polypeptide: Shikimate dehydrogenase (NADP(+)) (284 aa).

Shikimate-binding positions include 20–22 (SIS) and Ser67. Lys71 acts as the Proton acceptor in catalysis. Asp83 provides a ligand contact to NADP(+). Residues Asn92 and Asp107 each coordinate shikimate. NADP(+)-binding positions include 129–133 (GAGGA) and Ile227. Tyr229 provides a ligand contact to shikimate. Gly250 serves as a coordination point for NADP(+).

It belongs to the shikimate dehydrogenase family. In terms of assembly, homodimer.

It carries out the reaction shikimate + NADP(+) = 3-dehydroshikimate + NADPH + H(+). It functions in the pathway metabolic intermediate biosynthesis; chorismate biosynthesis; chorismate from D-erythrose 4-phosphate and phosphoenolpyruvate: step 4/7. Involved in the biosynthesis of the chorismate, which leads to the biosynthesis of aromatic amino acids. Catalyzes the reversible NADPH linked reduction of 3-dehydroshikimate (DHSA) to yield shikimate (SA). In Streptococcus pneumoniae (strain P1031), this protein is Shikimate dehydrogenase (NADP(+)).